Consider the following 34-residue polypeptide: Photosystem II reaction center protein M (34 aa).

The helical transmembrane segment at 5 to 25 (ILALIAIALFISVPTAFLIII) threads the bilayer.

It belongs to the PsbM family. PSII is composed of 1 copy each of membrane proteins PsbA, PsbB, PsbC, PsbD, PsbE, PsbF, PsbH, PsbI, PsbJ, PsbK, PsbL, PsbM, PsbT, PsbX, PsbY, PsbZ, Psb30/Ycf12, at least 3 peripheral proteins of the oxygen-evolving complex and a large number of cofactors. It forms dimeric complexes.

It localises to the plastid. The protein localises to the chloroplast thylakoid membrane. Functionally, one of the components of the core complex of photosystem II (PSII). PSII is a light-driven water:plastoquinone oxidoreductase that uses light energy to abstract electrons from H(2)O, generating O(2) and a proton gradient subsequently used for ATP formation. It consists of a core antenna complex that captures photons, and an electron transfer chain that converts photonic excitation into a charge separation. This subunit is found at the monomer-monomer interface. The sequence is that of Photosystem II reaction center protein M from Gnetum parvifolium (Small-leaved jointfir).